The sequence spans 239 residues: tRNA (guanine-N(1)-)-methyltransferase (239 aa).

Residues glycine 108 and 127–132 (LGDYVL) each bind S-adenosyl-L-methionine.

This sequence belongs to the RNA methyltransferase TrmD family. Homodimer.

It localises to the cytoplasm. It catalyses the reaction guanosine(37) in tRNA + S-adenosyl-L-methionine = N(1)-methylguanosine(37) in tRNA + S-adenosyl-L-homocysteine + H(+). Specifically methylates guanosine-37 in various tRNAs. The sequence is that of tRNA (guanine-N(1)-)-methyltransferase from Streptococcus pneumoniae serotype 19F (strain G54).